A 1955-amino-acid chain; its full sequence is Callose synthase 3 (1955 aa).

Residues 1-488 (MSATRGGPDQ…FWHVFRSFDR (488 aa)) lie on the Cytoplasmic side of the membrane. Residues 489 to 509 (MWSFYILCLQAMIIMAWDGGQ) traverse the membrane as a helical segment. The Extracellular segment spans residues 510-521 (PSSVFGADVFKK). A helical membrane pass occupies residues 522–542 (VLSVFITAAIMKLGQAVLDVI). Residues 543 to 558 (LNFKAHQSMTLHVKLR) lie on the Cytoplasmic side of the membrane. Residues 559-579 (YILKVFSAAAWVIILPVTYAY) form a helical membrane-spanning segment. Topologically, residues 580–604 (SWKDPPAFARTIKSWFGSAMHSPSL) are extracellular. Residues 605 to 625 (FIIAVVSYLSPNMLAGVMFLF) form a helical membrane-spanning segment. Residues 626–660 (PLLRRFLERSNYRIVMLMMWWSQPRLYVGRGMHES) are Cytoplasmic-facing. The helical transmembrane segment at 661–681 (AFSLFKYTMFWVLLIATKLAF) threads the bilayer. The Extracellular portion of the chain corresponds to 682-717 (SYYIEIRPLVAPTQAIMKARVTNFQWHEFFPRAKNN). A helical transmembrane segment spans residues 718 to 738 (IGVVIALWAPIILVYFMDSQI). The Cytoplasmic portion of the chain corresponds to 739 to 1517 (WYAIFSTLFG…FDFFRMMSCY (779 aa)). A helical membrane pass occupies residues 1518–1538 (FTTVGFYFSTLITVLTVYIFL). At 1539 to 1566 (YGRLYLVLSGLEQGLSTQKGIRDNTPLQ) the chain is on the extracellular side. The helical transmembrane segment at 1567–1587 (IALASQSFVQIGFLMALPMLM) threads the bilayer. Residues 1588–1597 (EIGLERGFRT) are Cytoplasmic-facing. A helical transmembrane segment spans residues 1598 to 1618 (ALSEFVLMQLQLAPVFFTFSL). Topologically, residues 1619-1661 (GTKTHYYGRTLLHGGAKYRSTGRGFVVFHAKFADNYRLYSRSH) are extracellular. The helical transmembrane segment at 1662 to 1682 (FVKGLEMMLLLVVYQIFGSAY) threads the bilayer. The Cytoplasmic portion of the chain corresponds to 1683-1688 (RGVLAY). A helical membrane pass occupies residues 1689 to 1709 (LLITISMWFMVGTWLFAPFLF). At 1710–1761 (NPSGFEWQKIVDDWTDWNKWINNIGGIGVPAEKSWESWWEEEQEHLRYSGKR) the chain is on the extracellular side. A helical membrane pass occupies residues 1762 to 1782 (GIVVEILLALRFFIYQYGLVY). Residues 1783–1792 (HLTITEKTKN) are Cytoplasmic-facing. The chain crosses the membrane as a helical span at residues 1793–1813 (FLVYGVSWLVIFLILFVMKTV). At 1814–1833 (SVGRRRFSASFQLMFRLIKG) the chain is on the extracellular side. The helical transmembrane segment at 1834 to 1854 (LIFMTFIAIIVILITLAHMTI) threads the bilayer. Topologically, residues 1855 to 1856 (QD) are cytoplasmic. Residues 1857–1877 (IIVCILAFMPTGWGMLLIAQA) traverse the membrane as a helical segment. The Extracellular portion of the chain corresponds to 1878 to 1899 (CKPVVHRAGFWGSVRTLARGYE). Residues 1900-1920 (IVMGLLLFTPVAFLAWFPFVS) traverse the membrane as a helical segment. At 1921–1955 (EFQTRMLFNQAFSRGLQISRILGGHRKDRSSRNKE) the chain is on the cytoplasmic side.

Belongs to the glycosyltransferase 48 family.

It is found in the cell membrane. It catalyses the reaction [(1-&gt;3)-beta-D-glucosyl](n) + UDP-alpha-D-glucose = [(1-&gt;3)-beta-D-glucosyl](n+1) + UDP + H(+). Involved in callose synthesis at the forming cell plate during cytokinesis. During plant growth and development, callose is found as a transitory component of the cell plate in dividing cells, is a major component of pollen mother cell walls and pollen tubes, and is found as a structural component of plasmodesmatal canals. This Arabidopsis thaliana (Mouse-ear cress) protein is Callose synthase 3 (CALS3).